Reading from the N-terminus, the 101-residue chain is RNA-binding protein Hfq (101 aa).

In terms of domain architecture, Sm spans 9–68 (DPYLNALRRERIPVSIYLVNGIKLQGQIESFDQFIILLKNTVSQMVYKHAISTVVPARSI). The segment at 68–91 (ISHNNNGSSQAQAPQQAVQTTQPV) is disordered. Positions 77–91 (QAQAPQQAVQTTQPV) are enriched in low complexity.

Belongs to the Hfq family. As to quaternary structure, homohexamer.

Functionally, RNA chaperone that binds small regulatory RNA (sRNAs) and mRNAs to facilitate mRNA translational regulation in response to envelope stress, environmental stress and changes in metabolite concentrations. Also binds with high specificity to tRNAs. The chain is RNA-binding protein Hfq from Haemophilus ducreyi (strain 35000HP / ATCC 700724).